Reading from the N-terminus, the 151-residue chain is Regulatory protein RecX (151 aa).

This sequence belongs to the RecX family.

It localises to the cytoplasm. Its function is as follows. Modulates RecA activity. This is Regulatory protein RecX from Chlorobium phaeobacteroides (strain BS1).